Consider the following 53-residue polypeptide: Large ribosomal subunit protein bL32 (53 aa).

Basic residues predominate over residues 1-20 (MAVPKRRVSHTRAAKRRTHY). A disordered region spans residues 1-53 (MAVPKRRVSHTRAAKRRTHYKLTLPMPVKDADGTWRMPHHMNMTTGEYKTTKA). Positions 42–53 (NMTTGEYKTTKA) are enriched in polar residues.

It belongs to the bacterial ribosomal protein bL32 family.

In Sulfurovum sp. (strain NBC37-1), this protein is Large ribosomal subunit protein bL32.